The primary structure comprises 505 residues: Amidophosphoribosyltransferase (505 aa).

Residue Cys2 is the Nucleophile of the active site. Residues 2-235 (CGIVGIVSQS…AGEAVYVTFD (234 aa)) form the Glutamine amidotransferase type-2 domain. Mg(2+) is bound by residues Thr306, Asp368, and Asp369. The tract at residues 484-505 (RNDNAKKKREKQASNLEIYNEQ) is disordered. Residues 496 to 505 (ASNLEIYNEQ) show a composition bias toward polar residues.

It in the C-terminal section; belongs to the purine/pyrimidine phosphoribosyltransferase family. The cofactor is Mg(2+).

The enzyme catalyses 5-phospho-beta-D-ribosylamine + L-glutamate + diphosphate = 5-phospho-alpha-D-ribose 1-diphosphate + L-glutamine + H2O. The protein operates within purine metabolism; IMP biosynthesis via de novo pathway; N(1)-(5-phospho-D-ribosyl)glycinamide from 5-phospho-alpha-D-ribose 1-diphosphate: step 1/2. Functionally, catalyzes the formation of phosphoribosylamine from phosphoribosylpyrophosphate (PRPP) and glutamine. The polypeptide is Amidophosphoribosyltransferase (Haemophilus influenzae (strain ATCC 51907 / DSM 11121 / KW20 / Rd)).